Reading from the N-terminus, the 102-residue chain is Small ribosomal subunit protein uS10 (102 aa).

Belongs to the universal ribosomal protein uS10 family. In terms of assembly, part of the 30S ribosomal subunit.

Involved in the binding of tRNA to the ribosomes. The chain is Small ribosomal subunit protein uS10 from Sulfurihydrogenibium sp. (strain YO3AOP1).